A 517-amino-acid chain; its full sequence is Cytochrome P450 monooxygenase TRI4 (517 aa).

Residues 15–37 (AVGAAVAVGALYFFCQCFYNLYL) form a helical membrane-spanning segment. N-linked (GlcNAc...) asparagine glycosylation is present at asparagine 444. Heme is bound at residue cysteine 452.

It belongs to the cytochrome P450 family. It depends on heme as a cofactor.

It is found in the membrane. Its pathway is sesquiterpene biosynthesis; trichothecene biosynthesis. Cytochrome P450 monooxygenase; part of the gene cluster that mediates the production of the antimicrobial trichothecene harzianum A (HA) that plays a role in Botrytis cinerea antagonistic activity and plant defense priming. The biosynthesis of harzianum A begins with the cyclization of farnesyl diphosphate to trichodiene and is catalyzed by the trichodiene synthase TRI5. Trichodiene undergoes a series of oxygenations catalyzed by the cytochrome P450 monooxygenase TRI4. TRI4 controls the addition of 3 oxygens at C-2, C-11, and the C-12, C-13-epoxide to form the intermediate isotrichodiol. Isotrichodiol then undergoes a non-enzymatic isomerization and cyclization to form 12,13-epoxytrichothec-9-ene (EPT) which is further converted to trichodermol by the cytochrome P450 monooxygenase TRI11 via C-4 hydroxylation. The last step of HA synthesis is esterification of an octatriendioyl moiety to the C-4 oxygen of trichodermol. The octatriendioyl moiety is probably produced by the polyketide synthase TRI17 and the esterification performed by the trichothecene O-acetyltransferase TRI3. The polypeptide is Cytochrome P450 monooxygenase TRI4 (Trichoderma arundinaceum).